We begin with the raw amino-acid sequence, 633 residues long: Phosphomethylpyrimidine synthase (633 aa).

Positions 1 to 13 (MNIRSNPDTTLPA) are enriched in polar residues. The segment at 1–20 (MNIRSNPDTTLPAVTTGPLP) is disordered. Substrate is bound by residues N221, M250, Y279, H315, 335–337 (SRG), 376–379 (DGLR), and E415. H419 is a binding site for Zn(2+). Residue Y442 coordinates substrate. H483 serves as a coordination point for Zn(2+). The [4Fe-4S] cluster site is built by C563, C566, and C571.

Belongs to the ThiC family. In terms of assembly, homodimer. [4Fe-4S] cluster is required as a cofactor.

It catalyses the reaction 5-amino-1-(5-phospho-beta-D-ribosyl)imidazole + S-adenosyl-L-methionine = 4-amino-2-methyl-5-(phosphooxymethyl)pyrimidine + CO + 5'-deoxyadenosine + formate + L-methionine + 3 H(+). Its pathway is cofactor biosynthesis; thiamine diphosphate biosynthesis. Its function is as follows. Catalyzes the synthesis of the hydroxymethylpyrimidine phosphate (HMP-P) moiety of thiamine from aminoimidazole ribotide (AIR) in a radical S-adenosyl-L-methionine (SAM)-dependent reaction. This Bradyrhizobium sp. (strain ORS 278) protein is Phosphomethylpyrimidine synthase.